A 304-amino-acid polypeptide reads, in one-letter code: Olfactory receptor 8G2 (304 aa).

Residues 1-41 (MVFLSSVETDQRKMSAGNHSSVTEFILAGLSEQPELQLRLF) are Extracellular-facing. An N-linked (GlcNAc...) asparagine glycan is attached at asparagine 18. The chain crosses the membrane as a helical span at residues 42 to 62 (LLFLGIYVVTVVGNLSMITLI). The Cytoplasmic portion of the chain corresponds to 63–69 (GLSSHLH). The chain crosses the membrane as a helical span at residues 70 to 90 (TPMYYFLSGLSFIDLCHSTII). The Extracellular segment spans residues 91–110 (TPKMLVNFVTEKNIISYPEC). Cysteines 110 and 192 form a disulfide. A helical transmembrane segment spans residues 111 to 130 (MTQLYFFLIFAIAECHMLAV). At 131–154 (TAYDRYVAICSPLLYNVIMSYHHC) the chain is on the cytoplasmic side. Residues 155-175 (FWLTVGVYVLGILGSTIHTGF) form a helical membrane-spanning segment. At 176 to 193 (MLRLFLCKTNVINHYFCD) the chain is on the extracellular side. A helical membrane pass occupies residues 194-214 (LFPLLGLSCSSTYINELLVLV). The Cytoplasmic segment spans residues 215-217 (LSA). The helical transmembrane segment at 218–238 (FNILTPALTILASYIFIIASI) threads the bilayer. The Extracellular portion of the chain corresponds to 239–257 (LRIRSTEGRSKAFSTCSSH). The helical transmembrane segment at 258 to 278 (ILAVAVFFGSAAFMYLQPSSV) threads the bilayer. Residues 279 to 304 (SSMDQRKVSSVFYTTIVPMLNPQSIA) are Cytoplasmic-facing.

Belongs to the G-protein coupled receptor 1 family.

The protein resides in the cell membrane. Odorant receptor. This Homo sapiens (Human) protein is Olfactory receptor 8G2.